We begin with the raw amino-acid sequence, 426 residues long: Serine--tRNA ligase (426 aa).

Position 233–235 (T233–E235) interacts with L-serine. Position 264 to 266 (R264 to E266) interacts with ATP. E287 lines the L-serine pocket. E351–S354 lines the ATP pocket. L-serine is bound at residue S387.

It belongs to the class-II aminoacyl-tRNA synthetase family. Type-1 seryl-tRNA synthetase subfamily. As to quaternary structure, homodimer. The tRNA molecule binds across the dimer.

It is found in the cytoplasm. The catalysed reaction is tRNA(Ser) + L-serine + ATP = L-seryl-tRNA(Ser) + AMP + diphosphate + H(+). The enzyme catalyses tRNA(Sec) + L-serine + ATP = L-seryl-tRNA(Sec) + AMP + diphosphate + H(+). Its pathway is aminoacyl-tRNA biosynthesis; selenocysteinyl-tRNA(Sec) biosynthesis; L-seryl-tRNA(Sec) from L-serine and tRNA(Sec): step 1/1. In terms of biological role, catalyzes the attachment of serine to tRNA(Ser). Is also able to aminoacylate tRNA(Sec) with serine, to form the misacylated tRNA L-seryl-tRNA(Sec), which will be further converted into selenocysteinyl-tRNA(Sec). This is Serine--tRNA ligase from Clostridium kluyveri (strain NBRC 12016).